The primary structure comprises 397 residues: Lysophospholipid transporter LplT (397 aa).

The Periplasmic portion of the chain corresponds to 1 to 17; that stretch reads MSESVHTNTSLWSKGMK. The helical transmembrane segment at 18 to 38 threads the bilayer; sequence AVIVAQFLSAFGDNALLFATL. Residues 39 to 52 lie on the Cytoplasmic side of the membrane; the sequence is ALLKAQFYPEWSQP. Residues 53-73 form a helical membrane-spanning segment; that stretch reads ILQMVFVGAYILFAPFVGQVA. Residues 74–90 lie on the Periplasmic side of the membrane; the sequence is DSFAKGRVMMFANGLKL. A helical membrane pass occupies residues 91-111; sequence LGAASICFGINPFLGYTLVGV. The Cytoplasmic segment spans residues 112–144; it reads GAAAYSPAKYGILGELTTGSKLVKANGLMEAST. Residues 145-165 form a helical membrane-spanning segment; it reads IAAILLGSVAGGVLADWHVLV. Position 166 (A166) is a topological domain, periplasmic. The chain crosses the membrane as a helical span at residues 167–187; it reads LAACALAYGGAVVANIYIPKL. The Cytoplasmic segment spans residues 188–226; the sequence is AAARPGQSWNLINMTRSFLNACTSLWRNGETRFSLVGTS. A helical membrane pass occupies residues 227–247; that stretch reads LFWGAGVTLRFLLVLWVPVAL. Residues 248 to 256 lie on the Periplasmic side of the membrane; the sequence is GITDNATPT. Residues 257–277 form a helical membrane-spanning segment; it reads YLNAMVAIGIVVGAGAAAKLV. Residues 278–280 lie on the Cytoplasmic side of the membrane; the sequence is TLE. Residues 281–301 traverse the membrane as a helical segment; that stretch reads TVSRCMPAGILIGVVVLIFSL. Residues 302–304 lie on the Periplasmic side of the membrane; that stretch reads QHE. Residues 305 to 325 traverse the membrane as a helical segment; that stretch reads LLPAYALLMLIGVMGGFFVVP. The Cytoplasmic portion of the chain corresponds to 326 to 343; the sequence is LNALLQERGKKSVGAGNA. The helical transmembrane segment at 344–364 threads the bilayer; that stretch reads IAVQNLGENSAMLLMLGIYSL. Residues 365–366 lie on the Periplasmic side of the membrane; sequence AV. A helical membrane pass occupies residues 367 to 387; it reads MIGIPVVPIGIGFGALFALAI. Topologically, residues 388 to 397 are cytoplasmic; that stretch reads TALWIWQRRH.

The protein belongs to the major facilitator superfamily. LplT (TC 2.A.1.42) family.

It localises to the cell inner membrane. Functionally, catalyzes the facilitated diffusion of 2-acyl-glycero-3-phosphoethanolamine (2-acyl-GPE) into the cell. The sequence is that of Lysophospholipid transporter LplT from Escherichia coli O8 (strain IAI1).